A 35-amino-acid chain; its full sequence is Photosystem II reaction center protein T (35 aa).

The chain crosses the membrane as a helical span at residues 3-23; that stretch reads ALVYTFLLISTLGIIFFAIFF.

Belongs to the PsbT family. As to quaternary structure, PSII is composed of 1 copy each of membrane proteins PsbA, PsbB, PsbC, PsbD, PsbE, PsbF, PsbH, PsbI, PsbJ, PsbK, PsbL, PsbM, PsbT, PsbY, PsbZ, Psb30/Ycf12, at least 3 peripheral proteins of the oxygen-evolving complex and a large number of cofactors. It forms dimeric complexes.

Its subcellular location is the plastid. It is found in the chloroplast thylakoid membrane. In terms of biological role, found at the monomer-monomer interface of the photosystem II (PS II) dimer, plays a role in assembly and dimerization of PSII. PSII is a light-driven water plastoquinone oxidoreductase, using light energy to abstract electrons from H(2)O, generating a proton gradient subsequently used for ATP formation. This is Photosystem II reaction center protein T from Welwitschia mirabilis (Tree tumbo).